The sequence spans 507 residues: Maturase K (507 aa).

This sequence belongs to the intron maturase 2 family. MatK subfamily.

It is found in the plastid. The protein resides in the chloroplast. In terms of biological role, usually encoded in the trnK tRNA gene intron. Probably assists in splicing its own and other chloroplast group II introns. This chain is Maturase K, found in Fagopyrum tataricum (Tartarian buckwheat).